Reading from the N-terminus, the 311-residue chain is MKVAVLGAAGGIGQALALLLKTQLPAGSKLSLYDIAPVTPGVAVDLSHIPTAVEVKGFCGEDPTPALEGADVVLISAGVARKPGMDRSDLFNINAGIVRNLIEKVAATCPKALVGIITNPVNTTVAIAAEVLKKAGVYDKNRLFGVTTLDVIRAETFVAEAKGVDVASVKVNVIGGHSGVTILPLLSQIEGVNFSDEEVAALTKRIQNAGTEVVEAKAGGGSATLSMGQAAFRFGMSLIRGLQGEANVVECAYVDGGSEHAVFFAQPVLLGKNGVEKVLPYGEVSAFEANARDAMLDTLKGDIQLGVDFVK.

Residues 7–13 (GAAGGIG) and Asp-34 contribute to the NAD(+) site. Substrate contacts are provided by Arg-81 and Arg-87. NAD(+) contacts are provided by residues Asn-94 and 117-119 (ITN). Residues Asn-119 and Arg-153 each contribute to the substrate site. His-177 acts as the Proton acceptor in catalysis. Position 227 (Met-227) interacts with NAD(+).

Belongs to the LDH/MDH superfamily. MDH type 1 family. As to quaternary structure, homodimer.

The enzyme catalyses (S)-malate + NAD(+) = oxaloacetate + NADH + H(+). In terms of biological role, catalyzes the reversible oxidation of malate to oxaloacetate. The chain is Malate dehydrogenase from Shewanella amazonensis (strain ATCC BAA-1098 / SB2B).